Here is a 750-residue protein sequence, read N- to C-terminus: Circadian input-output histidine kinase CikA (750 aa).

The segment at 1–173 (MLPAFSPIFR…QVIAQIRQSL (173 aa)) is N-terminal domain. The segment at 174 to 333 (DLSEILNNAV…KNFLGQIGEH (160 aa)) is GAF domain. The 225-residue stretch at 385 to 609 (NISHELRTPL…IFTTVIPQQN (225 aa)) folds into the Histidine kinase domain. Phosphohistidine; by autocatalysis is present on His-388. Positions 604–750 (VIPQQNFPPT…VQSIQQEPLR (147 aa)) are psR domain, bind KaiB(fs). The Response regulatory domain maps to 631-745 (SVIVIEQDEE…LLLQRVQSIQ (115 aa)). Asp-680 carries the post-translational modification 4-aspartylphosphate.

In the N-terminal section; belongs to the phytochrome family. As to quaternary structure, homodimer. Part of the circadian clock (KaiA, KaiB, KaiC, CikA, RpaA, SasA), the composition of which varies during the circadian cycle. KaiA and CikA compete for binding to KaiB(fs). Interacts with RpaA.

The enzyme catalyses ATP + protein L-histidine = ADP + protein N-phospho-L-histidine.. In terms of biological role, functions in an input pathway to the Kai circadian clock. Senses oxidized quinones via its C-terminal pseudo-receiver domain, providing a link between cell metabolism and the clock. Affects the ratio of phosphorylated to unphosphorylated KaiC, binds quinones via its pseudo-receptor domain. Quinone-binding destabilizes the protein rapidly. Autophosphorylates, does not transfer the phosphate to its pseudo-receiver (PsR) domain. May play a role in cell division. Functionally, also functions in a two-component CikA/RpaA output pathway from the circadian clock, negatively regulating kaiBC expression independently of labA and of sasA. One of three clock output pathways. Dephosphorylates phospho-RpaA, enhanced by KaiB and KaiC, has only modest kinase activity on RpaA. The chain is Circadian input-output histidine kinase CikA from Synechocystis sp. (strain ATCC 27184 / PCC 6803 / Kazusa).